Consider the following 310-residue polypeptide: Putative S-adenosyl-L-methionine-dependent methyltransferase MUL_2766 (310 aa).

Residues aspartate 131 and aspartate 160 to leucine 161 contribute to the S-adenosyl-L-methionine site.

This sequence belongs to the UPF0677 family.

Functionally, exhibits S-adenosyl-L-methionine-dependent methyltransferase activity. In Mycobacterium ulcerans (strain Agy99), this protein is Putative S-adenosyl-L-methionine-dependent methyltransferase MUL_2766.